Here is a 673-residue protein sequence, read N- to C-terminus: UvrABC system protein B (673 aa).

A Helicase ATP-binding domain is found at 26-183; it reads EGLEDGLAHQ…RRLAELQYTR (158 aa). 39–46 contributes to the ATP binding site; it reads GVTGSGKT. A Beta-hairpin motif is present at residues 92–115; sequence YYDYYQPEAYVPSSDTFIEKDASV. The Helicase C-terminal domain occupies 431–597; it reads QVDDLLSEIR…GLNKKVVDIL (167 aa). The UVR domain maps to 633 to 668; the sequence is QQKIHELEGQMMQHAQNLEFEEAAQIRDQLHQLREL.

Belongs to the UvrB family. Forms a heterotetramer with UvrA during the search for lesions. Interacts with UvrC in an incision complex.

The protein localises to the cytoplasm. Its function is as follows. The UvrABC repair system catalyzes the recognition and processing of DNA lesions. A damage recognition complex composed of 2 UvrA and 2 UvrB subunits scans DNA for abnormalities. Upon binding of the UvrA(2)B(2) complex to a putative damaged site, the DNA wraps around one UvrB monomer. DNA wrap is dependent on ATP binding by UvrB and probably causes local melting of the DNA helix, facilitating insertion of UvrB beta-hairpin between the DNA strands. Then UvrB probes one DNA strand for the presence of a lesion. If a lesion is found the UvrA subunits dissociate and the UvrB-DNA preincision complex is formed. This complex is subsequently bound by UvrC and the second UvrB is released. If no lesion is found, the DNA wraps around the other UvrB subunit that will check the other stand for damage. This Salmonella heidelberg (strain SL476) protein is UvrABC system protein B.